A 253-amino-acid chain; its full sequence is Phosphate import ATP-binding protein PstB 1 (253 aa).

Residues 7–248 (LQIRDLSVYY…PKRKETEDYI (242 aa)) form the ABC transporter domain. 39–46 (GPSGSGKS) lines the ATP pocket.

The protein belongs to the ABC transporter superfamily. Phosphate importer (TC 3.A.1.7) family. In terms of assembly, the complex is composed of two ATP-binding proteins (PstB), two transmembrane proteins (PstC and PstA) and a solute-binding protein (PstS).

It localises to the cell membrane. It carries out the reaction phosphate(out) + ATP + H2O = ADP + 2 phosphate(in) + H(+). Its function is as follows. Part of the ABC transporter complex PstSACB involved in phosphate import. Responsible for energy coupling to the transport system. In Streptococcus pyogenes serotype M12 (strain MGAS9429), this protein is Phosphate import ATP-binding protein PstB 1.